A 736-amino-acid polypeptide reads, in one-letter code: Putative ATP-dependent RNA helicase CG14443 (736 aa).

4 disordered regions span residues 32–58, 73–166, 183–237, and 265–296; these read TKSS…SSVL, GIEG…GERP, NSFK…NSWR, and SFTR…NTWK. Low complexity-rich tracts occupy residues 34 to 58 and 125 to 160; these read SSIW…SSVL and SSES…SHGS. A compositionally biased stretch (basic and acidic residues) spans 190-199; sequence TSRENKESRS. Positions 277 to 296 are enriched in polar residues; it reads LCYQDQSKNPSRPSNYNTWK. Positions 330–358 match the Q motif motif; that stretch reads LSFERSGFNATILQQLEDQGYDGPTPIQA. The Helicase ATP-binding domain maps to 361-534; the sequence is WSIAKEGKNI…NKFLGQYTAI (174 aa). 374–381 provides a ligand contact to ATP; sequence SGKGTGKT. Residues 482-485 carry the DEAD box motif; sequence DNID. Residues 561 to 719 enclose the Helicase C-terminal domain; sequence KVERLMKELT…LLQLAEEKMF (159 aa).

It belongs to the DEAD box helicase family.

The enzyme catalyses ATP + H2O = ADP + phosphate + H(+). Its function is as follows. Probable ATP-binding RNA helicase. This chain is Putative ATP-dependent RNA helicase CG14443, found in Drosophila melanogaster (Fruit fly).